Here is a 187-residue protein sequence, read N- to C-terminus: Mitochondrial import receptor subunit TOM20-4 (187 aa).

N-acetylmethionine is present on methionine 1. Residues 1–160 (MDMQNENERL…QKKTSEFKYD (160 aa)) are Cytoplasmic-facing. The stretch at 84-117 (LSFGFLSSDQTEASDNFEKASQFFQLAVEEQPES) is one TPR repeat. Residues 161 to 178 (VFGWVILASYVVAWISFA) traverse the membrane as a helical segment. Residues 179–187 (NSQTPVSRQ) are Mitochondrial intermembrane-facing. An AKR2A-binding sequence (ABS) required for mitochondrion outer membrane targeting motif is present at residues 179–187 (NSQTPVSRQ).

Belongs to the Tom20 family. As to quaternary structure, forms part of the preprotein translocase complex of the outer mitochondrial membrane (TOM complex) which consists of at least 6 different proteins (TOM5, TOM6, TOM7, TOM20, TOM22/TOM9 and TOM40). Interacts with a variety of mitochondrial precursor proteins. Interacts with AKR2A. Component of a mitochondrial large protein complex that contains, at least, MIC60, DGS1, TOM40, TOM20 proteins, and petC/RISP. The N-terminus is blocked. Expressed in roots, flowers, young cotyledons and leaves.

It is found in the mitochondrion outer membrane. In terms of biological role, central component of the receptor complex responsible for the recognition and translocation of cytosolically synthesized mitochondrial preproteins. Together with TOM22 functions as the transit peptide receptor at the surface of the mitochondrion outer membrane and facilitates the movement of preproteins into the translocation pore. The protein is Mitochondrial import receptor subunit TOM20-4 of Arabidopsis thaliana (Mouse-ear cress).